The chain runs to 853 residues: Envelope glycoprotein gp160 (853 aa).

Residues 1-31 (MRVKEIRKNWQHLRGGILLLGMLMICSAAKE) form the signal peptide. Over 32–681 (KTWVTIYYGV…ITNWLWYIRL (650 aa)) the chain is Extracellular. A disulfide bridge links C53 with C73. Residues N87, N129, N134, N138, N157, N189, N199, N232, N236, N243, N264, N278, N291, N297, N303, N333, N340, N356, and N362 are each glycosylated (N-linked (GlcNAc...) asparagine; by host). Cystine bridges form between C118-C207, C125-C198, C130-C158, C220-C249, and C230-C241. The tract at residues 130 to 157 (CTNLNITKNTTNPTSSSWGMMEKGEIKN) is V1. Residues 158 to 198 (CSFYITTSIRNKVKKEYALFNRLDVVPIENTNNTKYRLISC) are V2. Residues 298–331 (CTRPNNNTRRRLSIGPGRAFYARRNIIGDIRQAH) form a V3 region. C298 and C332 are oxidised to a cystine. Residues 364-374 (SSGGDPEIVMH) are CD4-binding loop. Intrachain disulfides connect C378–C441 and C385–C414. Positions 385-414 (CNTAQLFNSTWNVTGGTNGTEGNDIITLQC) are V4. 5 N-linked (GlcNAc...) asparagine; by host glycosylation sites follow: N392, N396, N402, N444, and N456. Residues 459 to 468 (ETETEIFRPG) are V5. The fusion peptide stretch occupies residues 509–529 (AVGIGAVFLGFLGAAGSTMGA). Positions 571–589 (KQLQARVLALERYLRDQQL) are immunosuppression. C595 and C601 form a disulfide bridge. 4 N-linked (GlcNAc...) asparagine; by host glycosylation sites follow: N608, N613, N622, and N634. Residues 630-664 (REIDNYTDYIYDLLEKSQTQQEKNEKELLELDKWA) adopt a coiled-coil conformation. The MPER; binding to GalCer stretch occupies residues 659–680 (ELDKWASLWNWFDITNWLWYIR). Residues 682-702 (FIMIVGGLIGLRIVFAVLSIV) form a helical membrane-spanning segment. The Cytoplasmic portion of the chain corresponds to 703-853 (NRVRQGYSPL…IRQGLERALL (151 aa)). A YXXL motif; contains endocytosis signal motif is present at residues 709-712 (YSPL). Residues 718–740 (LPASRGPDRPEGTEEEGGERDRD) form a disordered region. Residues C761 and C834 are each lipidated (S-palmitoyl cysteine; by host). The Di-leucine internalization motif motif lies at 852–853 (LL).

The protein belongs to the HIV-1 env protein family. The mature envelope protein (Env) consists of a homotrimer of non-covalently associated gp120-gp41 heterodimers. The resulting complex protrudes from the virus surface as a spike. There seems to be as few as 10 spikes on the average virion. Interacts with host CD4, CCR5 and CXCR4. Gp120 also interacts with the C-type lectins CD209/DC-SIGN and CLEC4M/DC-SIGNR (collectively referred to as DC-SIGN(R)). Gp120 and gp41 interact with GalCer. Gp120 interacts with host ITGA4/ITGB7 complex; on CD4+ T-cells, this interaction results in rapid activation of integrin ITGAL/LFA-1, which facilitates efficient cell-to-cell spreading of HIV-1. Gp120 interacts with cell-associated heparan sulfate; this interaction increases virus infectivity on permissive cells and may be involved in infection of CD4- cells. In terms of assembly, the mature envelope protein (Env) consists of a homotrimer of non-covalently associated gp120-gp41 heterodimers. The resulting complex protrudes from the virus surface as a spike. There seems to be as few as 10 spikes on the average virion. Highly glycosylated by host. The high number of glycan on the protein is reffered to as 'glycan shield' because it contributes to hide protein sequence from adaptive immune system. Post-translationally, palmitoylation of the transmembrane protein and of Env polyprotein (prior to its proteolytic cleavage) is essential for their association with host cell membrane lipid rafts. Palmitoylation is therefore required for envelope trafficking to classical lipid rafts, but not for viral replication. In terms of processing, specific enzymatic cleavages in vivo yield mature proteins. Envelope glycoproteins are synthesized as an inactive precursor that is heavily N-glycosylated and processed likely by host cell furin in the Golgi to yield the mature SU and TM proteins. The cleavage site between SU and TM requires the minimal sequence [KR]-X-[KR]-R. About 2 of the 9 disulfide bonds of gp41 are reduced by P4HB/PDI, following binding to CD4 receptor.

The protein resides in the virion membrane. Its subcellular location is the host cell membrane. The protein localises to the host endosome membrane. Functionally, oligomerizes in the host endoplasmic reticulum into predominantly trimers. In a second time, gp160 transits in the host Golgi, where glycosylation is completed. The precursor is then proteolytically cleaved in the trans-Golgi and thereby activated by cellular furin or furin-like proteases to produce gp120 and gp41. Attaches the virus to the host lymphoid cell by binding to the primary receptor CD4. This interaction induces a structural rearrangement creating a high affinity binding site for a chemokine coreceptor like CXCR4 and/or CCR5. Acts as a ligand for CD209/DC-SIGN and CLEC4M/DC-SIGNR, which are respectively found on dendritic cells (DCs), and on endothelial cells of liver sinusoids and lymph node sinuses. These interactions allow capture of viral particles at mucosal surfaces by these cells and subsequent transmission to permissive cells. HIV subverts the migration properties of dendritic cells to gain access to CD4+ T-cells in lymph nodes. Virus transmission to permissive T-cells occurs either in trans (without DCs infection, through viral capture and transmission), or in cis (following DCs productive infection, through the usual CD4-gp120 interaction), thereby inducing a robust infection. In trans infection, bound virions remain infectious over days and it is proposed that they are not degraded, but protected in non-lysosomal acidic organelles within the DCs close to the cell membrane thus contributing to the viral infectious potential during DCs' migration from the periphery to the lymphoid tissues. On arrival at lymphoid tissues, intact virions recycle back to DCs' cell surface allowing virus transmission to CD4+ T-cells. Its function is as follows. Acts as a class I viral fusion protein. Under the current model, the protein has at least 3 conformational states: pre-fusion native state, pre-hairpin intermediate state, and post-fusion hairpin state. During fusion of viral and target intracellular membranes, the coiled coil regions (heptad repeats) assume a trimer-of-hairpins structure, positioning the fusion peptide in close proximity to the C-terminal region of the ectodomain. The formation of this structure appears to drive apposition and subsequent fusion of viral and target cell membranes. Complete fusion occurs in host cell endosomes and is dynamin-dependent, however some lipid transfer might occur at the plasma membrane. The virus undergoes clathrin-dependent internalization long before endosomal fusion, thus minimizing the surface exposure of conserved viral epitopes during fusion and reducing the efficacy of inhibitors targeting these epitopes. Membranes fusion leads to delivery of the nucleocapsid into the cytoplasm. This Human immunodeficiency virus type 1 group M subtype B (strain 89.6) (HIV-1) protein is Envelope glycoprotein gp160.